The primary structure comprises 667 residues: Probable potassium transport system protein Kup (667 aa).

12 helical membrane-spanning segments follow: residues 5–25 (GLLI…LYVM), 47–67 (ISLI…IIAL), 88–108 (AAWL…DGTL), 133–153 (VSNQ…LFSI), 164–184 (AFGP…LINI), 210–230 (AGFA…ALYS), 243–263 (SWPF…VWIL), 287–307 (LASI…LITG), 336–356 (IYIP…VLFF), 367–387 (GLSI…WLVL), 393–413 (LANL…MGSS), and 420–440 (GGYV…VWYF).

It belongs to the HAK/KUP transporter (TC 2.A.72) family.

It is found in the cell membrane. The enzyme catalyses K(+)(in) + H(+)(in) = K(+)(out) + H(+)(out). Transport of potassium into the cell. Likely operates as a K(+):H(+) symporter. The sequence is that of Probable potassium transport system protein Kup from Lactobacillus delbrueckii subsp. bulgaricus (strain ATCC 11842 / DSM 20081 / BCRC 10696 / JCM 1002 / NBRC 13953 / NCIMB 11778 / NCTC 12712 / WDCM 00102 / Lb 14).